A 212-amino-acid chain; its full sequence is Large ribosomal subunit protein uL3 (212 aa).

The segment at 136 to 155 (THGNSLSHRSNGSIGQNQTP) is disordered. Glutamine 153 carries the post-translational modification N5-methylglutamine.

It belongs to the universal ribosomal protein uL3 family. In terms of assembly, part of the 50S ribosomal subunit. Forms a cluster with proteins L14 and L19. Post-translationally, methylated by PrmB.

In terms of biological role, one of the primary rRNA binding proteins, it binds directly near the 3'-end of the 23S rRNA, where it nucleates assembly of the 50S subunit. This is Large ribosomal subunit protein uL3 from Shewanella oneidensis (strain ATCC 700550 / JCM 31522 / CIP 106686 / LMG 19005 / NCIMB 14063 / MR-1).